Reading from the N-terminus, the 53-residue chain is uncharacterized protein (53 aa).

The segment at arginine 34–arginine 53 is disordered.

This is an uncharacterized protein from Treponema pallidum (strain Nichols).